Consider the following 863-residue polypeptide: ATP-dependent helicase Lhr-Core protein 2 (863 aa).

ATP contacts are provided by F30, Q37, K60, T61, D179, E180, R377, and H380. The region spanning 41 to 234 is the Helicase ATP-binding domain; that stretch reads VIEIHKGENV…FVFGFNDDGT (194 aa). The short motif at 179 to 182 is the DEAH box element; sequence DEVH. A Helicase C-terminal domain is found at 275 to 424; sequence RLDELIEQHR…RIKIPQNPLD (150 aa). Positions 418–512 are WH domain; it reads IPQNPLDVLV…AIYYMNTGTI (95 aa). The tract at residues 513–863 is domain 4; that stretch reads PDEAKIEVYT…KIMAMIGELE (351 aa).

Belongs to the Lhr helicase family. Lhr-Core subfamily. In terms of assembly, monomer.

The enzyme catalyses ATP + H2O = ADP + phosphate + H(+). Unwinding of dsRNA duplexes is inhibited by AMP-PMP and ATP-gamma-S. Its function is as follows. A DNA:RNA helicase with a significant strand annealing activity, probably involved in DNA repair and RNA transactions. In vitro has a slow helicase activity with a preference for 3'-overhang duplexes; displaces RNA from 3'-overhang DNA:RNA or RNA:RNA duplexes. 3'-tailed double-stranded (ds)DNA is not unwound. The slow helicase activity on RNA duplexes is ATP-independent. Has strand annealing properties in the absence of ATP; forms 3'-overhang DNA:RNA, 3'-overhang dsRNA and 3'-overhang dsDNA duplexes but not 5'-overhang duplexes. A nucleic acid-dependent ATPase; single-stranded (ss)DNA and RNA are equally stimulatory. Binds ssDNA, RNA, dsDNA and dsRNA duplexes. This is ATP-dependent helicase Lhr-Core protein 2 from Thermococcus barophilus (strain DSM 11836 / MP).